The sequence spans 535 residues: ABC1 family protein C10F6.14c (535 aa).

This sequence belongs to the protein kinase superfamily. ADCK protein kinase family.

The chain is ABC1 family protein C10F6.14c from Schizosaccharomyces pombe (strain 972 / ATCC 24843) (Fission yeast).